The following is a 336-amino-acid chain: Dihydroorotate dehydrogenase (quinone) (336 aa).

FMN-binding positions include Ala62–Lys66 and Thr86. Lys66 lines the substrate pocket. Asn111 to Phe115 is a substrate binding site. Positions 139 and 172 each coordinate FMN. Asn172 contributes to the substrate binding site. Ser175 serves as the catalytic Nucleophile. Asn177 is a substrate binding site. Lys217 and Thr245 together coordinate FMN. Asn246 to Thr247 lines the substrate pocket. FMN is bound by residues Gly268, Gly297, and Tyr318 to Ser319.

It belongs to the dihydroorotate dehydrogenase family. Type 2 subfamily. In terms of assembly, monomer. FMN serves as cofactor.

It is found in the cell membrane. It catalyses the reaction (S)-dihydroorotate + a quinone = orotate + a quinol. Its pathway is pyrimidine metabolism; UMP biosynthesis via de novo pathway; orotate from (S)-dihydroorotate (quinone route): step 1/1. Its function is as follows. Catalyzes the conversion of dihydroorotate to orotate with quinone as electron acceptor. The sequence is that of Dihydroorotate dehydrogenase (quinone) from Pectobacterium carotovorum subsp. carotovorum (strain PC1).